The following is a 34-amino-acid chain: Photosystem II reaction center protein M (34 aa).

The chain crosses the membrane as a helical span at residues 5–25 (ILAFIATALFILIPTAFLLII).

This sequence belongs to the PsbM family. As to quaternary structure, PSII is composed of 1 copy each of membrane proteins PsbA, PsbB, PsbC, PsbD, PsbE, PsbF, PsbH, PsbI, PsbJ, PsbK, PsbL, PsbM, PsbT, PsbX, PsbY, PsbZ, Psb30/Ycf12, at least 3 peripheral proteins of the oxygen-evolving complex and a large number of cofactors. It forms dimeric complexes.

It is found in the plastid. The protein localises to the chloroplast thylakoid membrane. Functionally, one of the components of the core complex of photosystem II (PSII). PSII is a light-driven water:plastoquinone oxidoreductase that uses light energy to abstract electrons from H(2)O, generating O(2) and a proton gradient subsequently used for ATP formation. It consists of a core antenna complex that captures photons, and an electron transfer chain that converts photonic excitation into a charge separation. This subunit is found at the monomer-monomer interface. In Agrostis stolonifera (Creeping bentgrass), this protein is Photosystem II reaction center protein M.